A 622-amino-acid polypeptide reads, in one-letter code: Low affinity potassium transport system protein Kup (622 aa).

Transmembrane regions (helical) follow at residues 9–29 (LPAV…TSPL), 49–69 (VFGF…LKYL), 101–121 (VLVI…VITP), 137–157 (PSMD…LFII), 165–185 (VGKL…VLGA), 212–232 (AVSF…EALY), 247–267 (WFTV…ALLL), 279–299 (LLAP…ATII), 337–357 (IYIP…IVSF), 363–383 (LAAA…ILFC), 397–417 (AWVL…ANVV), and 419–439 (ILSG…IMTT).

Belongs to the HAK/KUP transporter (TC 2.A.72) family.

It is found in the cell inner membrane. It catalyses the reaction K(+)(in) + H(+)(in) = K(+)(out) + H(+)(out). In terms of biological role, responsible for the low-affinity transport of potassium into the cell. Likely operates as a K(+):H(+) symporter. The protein is Low affinity potassium transport system protein Kup of Pectobacterium carotovorum subsp. carotovorum (strain PC1).